We begin with the raw amino-acid sequence, 723 residues long: Homeobox protein vnd (723 aa).

Disordered regions lie at residues 1–115 (MTTS…GLAP), 224–307 (AHHG…HHHP), 465–549 (GSSG…RKRR), and 703–723 (HAHA…AWWP). The segment covering 10–22 (TPSKRDRDRERDN) has biased composition (basic and acidic residues). A compositionally biased stretch (low complexity) spans 23-36 (SSGLGSAGSLPASP). Over residues 37-48 (QSAITVSPSSPA) the composition is skewed to polar residues. Positions 61–92 (LERKREREDREDREDRKERQERHERDRDHERF) are enriched in basic and acidic residues. Residues 97–111 (STASTTVPTNTSSSS) are compositionally biased toward low complexity. The span at 226–235 (HGSDLSHHSA) shows a compositional bias: basic and acidic residues. A compositionally biased stretch (polar residues) spans 237-255 (ESTSGHRGQGSHTSPSALS). Basic and acidic residues predominate over residues 278 to 289 (EADHHSTTEHHA). Residues 298–307 (HPHHQQHHHP) are compositionally biased toward basic residues. A compositionally biased stretch (low complexity) spans 483–493 (NNNNNTTNNNN). Positions 512 to 528 (LNEDGIEEDIDDVDDAD) are enriched in acidic residues. Residues 545 to 604 (KRKRRVLFTKAQTYELERRFRQQRYLSAPEREHLASLIRLTPTQVKIWFQNHRYKTKRAQ) constitute a DNA-binding region (homeobox). Residues 703-716 (HAHAHGHGHPHAHA) show a composition bias toward basic residues.

It belongs to the NK-2 homeobox family. As to expression, expressed in the CNS and midgut.

The protein localises to the nucleus. Its function is as follows. Probable transcriptional regulator involved in the regulation of the proneural AS-C genes and the neurogenic genes of the enhancer of split complex. Could specifically activate proneural genes in the ventral-most neuroectoderm. The chain is Homeobox protein vnd (vnd) from Drosophila melanogaster (Fruit fly).